The primary structure comprises 263 residues: Very long chain fatty acid elongase F (263 aa).

The next 7 helical transmembrane spans lie at 10–30 (IPVF…LLFV), 55–75 (IFQI…LFVL), 98–118 (LICI…IFFV), 135–155 (FAMA…GVAF), 159–179 (LCLL…LSSI), 193–213 (ITIA…ITLA), and 223–243 (LTYG…QFYY).

It belongs to the ELO family. In terms of tissue distribution, no expression in adults.

Its subcellular location is the endoplasmic reticulum membrane. It carries out the reaction a very-long-chain acyl-CoA + malonyl-CoA + H(+) = a very-long-chain 3-oxoacyl-CoA + CO2 + CoA. Its function is as follows. Condensing enzyme that elongates saturated and monounsaturated very long chain fatty acids, to yield products up to 30 carbons in length. The polypeptide is Very long chain fatty acid elongase F (Drosophila simulans (Fruit fly)).